The primary structure comprises 530 residues: Retinoic acid-induced protein 2 (530 aa).

The span at 1–13 (MDDLQSQNLSMDM) shows a compositional bias: polar residues. The segment at 1-22 (MDDLQSQNLSMDMTDSPPALAN) is disordered.

In Homo sapiens (Human), this protein is Retinoic acid-induced protein 2 (RAI2).